We begin with the raw amino-acid sequence, 71 residues long: SPbeta prophage-derived uncharacterized protein YorP (71 aa).

This is SPbeta prophage-derived uncharacterized protein YorP (yorP) from Bacillus subtilis (strain 168).